A 62-amino-acid chain; its full sequence is Sauvatide (62 aa).

Residues 1 to 24 form the signal peptide; the sequence is MDILKKSLFLILFLGLVSISFCDG. The propeptide occupies 25–46; that stretch reads EKRQDDDEANESEEKKEIHEVE. The residue at position 58 (K58) is a Lysine amide.

In terms of tissue distribution, expressed by the skin glands.

Its subcellular location is the secreted. Its function is as follows. Induces contraction of smooth muscle in isolated rat urinary bladder with an EC(50) value of 2.2nM. In Phyllomedusa sauvagei (Sauvage's leaf frog), this protein is Sauvatide.